The sequence spans 270 residues: L-fucose dehydrogenase (270 aa).

Residues Arg-19, Ile-21, Asp-40, Lys-41, Asp-62, Val-63, Asn-89, Tyr-154, Lys-158, Ile-187, Thr-189, and Leu-191 each coordinate NAD(+).

Belongs to the short-chain dehydrogenases/reductases (SDR) family.

It catalyses the reaction L-fucose + NAD(+) = L-fucono-1,5-lactone + NADH + H(+). The enzyme catalyses D-arabinose + NAD(+) = D-arabinono-1,5-lactone + NADH + H(+). The catalysed reaction is L-galactose + NAD(+) = L-galactono-1,5-lactone + NADH + H(+). In terms of biological role, catalyzes the NAD(+)-dependent oxidation of L-fucose, yielding L-fucono-1,5-lactone, which rapidly converts spontaneously to L-fucone-1,4-lactone. Does not use NADPH. Displays low activity on L-fucose, D-arabinose and L-galactose compared with rabbit and human. This is consitent with the low L-fucose metabolism observed in this species. The protein is L-fucose dehydrogenase (Hsd17b14) of Rattus norvegicus (Rat).